Consider the following 297-residue polypeptide: uncharacterized protein (297 aa).

Positions 1–12 (MASYSFQFSTDA) are enriched in polar residues. The segment at 1 to 21 (MASYSFQFSTDATGKPGAAKP) is disordered.

It to B.subtilis XkdY/XepA.

This is an uncharacterized protein from Bacillus subtilis (strain 168).